The sequence spans 67 residues: Neurotoxin Os3 (67 aa).

Residues 3-67 (RDGYIAQPHN…GVIVDGEKCH (65 aa)) enclose the LCN-type CS-alpha/beta domain. 4 cysteine pairs are disulfide-bonded: Cys13/Cys66, Cys17/Cys39, Cys24/Cys48, and Cys28/Cys50.

Belongs to the long (4 C-C) scorpion toxin superfamily. Sodium channel inhibitor family. Alpha subfamily. As to expression, expressed by the venom gland.

It localises to the secreted. Binds to sodium channels (Nav) and inhibits the inactivation of the activated channels, thereby blocking neuronal transmission. The polypeptide is Neurotoxin Os3 (Orthochirus scrobiculosus (Central Asian scorpion)).